A 344-amino-acid chain; its full sequence is Dihydroorotase (344 aa).

Positions 13 and 15 each coordinate Zn(2+). Residues 15–17 and Asn41 contribute to the substrate site; that span reads HLR. Zn(2+) is bound by residues Lys99, His136, and His174. Lys99 is subject to N6-carboxylysine. His136 is a binding site for substrate. Leu219 serves as a coordination point for substrate. Asp247 is a Zn(2+) binding site. Asp247 is an active-site residue. Substrate-binding residues include His251 and Ala263.

It belongs to the metallo-dependent hydrolases superfamily. DHOase family. Class II DHOase subfamily. Homodimer. Zn(2+) is required as a cofactor.

The enzyme catalyses (S)-dihydroorotate + H2O = N-carbamoyl-L-aspartate + H(+). The protein operates within pyrimidine metabolism; UMP biosynthesis via de novo pathway; (S)-dihydroorotate from bicarbonate: step 3/3. In terms of biological role, catalyzes the reversible cyclization of carbamoyl aspartate to dihydroorotate. In Shewanella denitrificans (strain OS217 / ATCC BAA-1090 / DSM 15013), this protein is Dihydroorotase.